Here is a 350-residue protein sequence, read N- to C-terminus: Anthranilate phosphoribosyltransferase (350 aa).

Residues G94, 97–98 (GD), T102, 104–107 (NIST), 122–130 (KHGNRAVSS), and S134 contribute to the 5-phospho-alpha-D-ribose 1-diphosphate site. G94 is a binding site for anthranilate. Residue S106 coordinates Mg(2+). An anthranilate-binding site is contributed by N125. Position 180 (R180) interacts with anthranilate. Positions 239 and 240 each coordinate Mg(2+).

The protein belongs to the anthranilate phosphoribosyltransferase family. Homodimer. Requires Mg(2+) as cofactor.

The enzyme catalyses N-(5-phospho-beta-D-ribosyl)anthranilate + diphosphate = 5-phospho-alpha-D-ribose 1-diphosphate + anthranilate. It functions in the pathway amino-acid biosynthesis; L-tryptophan biosynthesis; L-tryptophan from chorismate: step 2/5. Functionally, catalyzes the transfer of the phosphoribosyl group of 5-phosphorylribose-1-pyrophosphate (PRPP) to anthranilate to yield N-(5'-phosphoribosyl)-anthranilate (PRA). This Geobacter sulfurreducens (strain ATCC 51573 / DSM 12127 / PCA) protein is Anthranilate phosphoribosyltransferase.